The sequence spans 2300 residues: Adenylate cyclase (2300 aa).

Composition is skewed to polar residues over residues 1–21 (MTRNDGGSRYSSIDSAQSSIT) and 28–41 (TPTSSLGSSMTRPL). Disordered stretches follow at residues 1–256 (MTRN…GSFL), 272–593 (GIRP…DLTR), and 631–652 (TKLFTSKKSSSAKQPQDDMDED). Composition is skewed to low complexity over residues 42–61 (SPSLQAGSSSSNGGHNVSRS) and 92–152 (SSQS…QVSP). Positions 153-169 (TGGSRLTQSPTTPSNAS) are enriched in polar residues. Residues 170–185 (IREHRMSELGGYRREM) are compositionally biased toward basic and acidic residues. A compositionally biased stretch (low complexity) spans 204–221 (QQQPQQPQQQQQQQQQQQ). Over residues 228–237 (VSGTFSNLSQ) the composition is skewed to polar residues. Over residues 303–313 (SIASITTTASS) the composition is skewed to low complexity. Residues 333–344 (GDRDDWPGRDSS) show a composition bias toward basic and acidic residues. Positions 345 to 357 (EISLPQPSHSGPM) are enriched in polar residues. Over residues 410-421 (PSRPRTPVPAPE) the composition is skewed to pro residues. Residues 455 to 469 (DSSQNPPKTSSSARS) show a composition bias toward polar residues. The span at 484–501 (KSNEDPRALKPSLSREDS) shows a compositional bias: basic and acidic residues. Over residues 511–550 (NGSSSMMGTRSRAQSPAPSWTGTSRGLKANSISDGTSSPA) the composition is skewed to polar residues. The span at 552–565 (SHKKGILGRFRRHN) shows a compositional bias: basic residues. A compositionally biased stretch (low complexity) spans 631 to 643 (TKLFTSKKSSSAK). Residues 749 to 841 (SNYYIRVFRS…IDEIGREDNS (93 aa)) form the Ras-associating domain. LRR repeat units lie at residues 867 to 890 (NQKLNHVDLSGRNLITIPVPLYRK), 892 to 914 (AEIVSLNLSRNLSLDVPRDFIQA), 915 to 938 (CTALRDIKYNNNEAQALPKSFATA), 939 to 961 (SKLTYLDVSNNRLQDLDHSELSK), 962 to 986 (LTGLLKLNLANNCLRSLPPTLGAYK), 988 to 1008 (LRTLNISSNFLDVFPSFICEL), 1009 to 1031 (ETIVDLDLSFNSINNLPDNLMKL), 1033 to 1055 (NLEKFVITNNRLSGPISESVRDL), 1056 to 1079 (VSLRELDIRYNQISTIDVLSDLPR), 1081 to 1097 (EILSADHNQISKFSGSF), 1098 to 1119 (ERLRSLKLNSNPIVKFEVKAPV), 1120 to 1142 (PTLKILNLSNAQLASIDESIDNL), 1143 to 1165 (MNLERLILDSNYFVSLPNQIGNL), 1166 to 1188 (KKLDHLSMANNHLGELPPEIGCL), 1189 to 1211 (TELRTLDVHGNNMRKLPNEIWWA), and 1213 to 1234 (KLEHLNASSNILTEFPKPASRA). A disordered region spans residues 1228–1336 (PKPASRAPQA…VITPSNGPRK (109 aa)). Over residues 1253–1263 (ANKNGLLSRTP) the composition is skewed to polar residues. A compositionally biased stretch (low complexity) spans 1313–1327 (TSVVSRSTTQSSTGV). LRR repeat units lie at residues 1349–1369 (SGSLKNLYLADNQLDDDVFEE), 1373–1396 (LPELRVLNLSCNDLSDMPQGTIRS), 1398–1420 (PQLVELYLSGNELTSLPAEDFLE), 1422–1445 (HCLLQTLHINGNKFINLPAEISRA), 1447–1469 (KLQVLDCSSNNLKYNVTNVPYDW), and 1474–1497 (NRDLRYLNLSGNKRLEIKNNYRQP). Residues 1552–1828 (PYGMADTLGK…NKLLIMMIGV (277 aa)) enclose the PPM-type phosphatase domain. Residues 1847 to 1867 (FSMPQDDPSHVPPSGNKRRKV) are disordered. The region spanning 1892–2029 (SIVFTDIKNS…PMVNKASRIS (138 aa)) is the Guanylate cyclase domain. 2 residues coordinate Mg(2+): Asp1897 and Asp1940. Residues 2272-2300 (LDQAETDDATDNNSSGDVDTLDGSDTEQE) form a disordered region. Over residues 2290–2300 (DTLDGSDTEQE) the composition is skewed to acidic residues.

It belongs to the adenylyl cyclase class-4/guanylyl cyclase family. The cofactor is Mg(2+).

It catalyses the reaction ATP = 3',5'-cyclic AMP + diphosphate. Functionally, plays essential roles in regulation of cellular metabolism by catalyzing the synthesis of a second messenger, cAMP. The chain is Adenylate cyclase (cr-1) from Neurospora crassa (strain ATCC 24698 / 74-OR23-1A / CBS 708.71 / DSM 1257 / FGSC 987).